The primary structure comprises 229 residues: Potassium/proton antiporter CemA (229 aa).

Helical transmembrane passes span 7–27 (FTSLLYLASIVFLPWWISLSF), 114–134 (IICFVILSGYSILGNEELVIL), 145–165 (LSDTIKAFWILLLTDFFIGFH), and 189–209 (ILSSLVCIFPVILDTLFKFWV).

Belongs to the CemA family.

Its subcellular location is the plastid. It localises to the chloroplast inner membrane. It carries out the reaction K(+)(in) + H(+)(out) = K(+)(out) + H(+)(in). In terms of biological role, contributes to K(+)/H(+) antiport activity by supporting proton efflux to control proton extrusion and homeostasis in chloroplasts in a light-dependent manner to modulate photosynthesis. Prevents excessive induction of non-photochemical quenching (NPQ) under continuous-light conditions. Indirectly promotes efficient inorganic carbon uptake into chloroplasts. This Daucus carota (Wild carrot) protein is Potassium/proton antiporter CemA.